The sequence spans 120 residues: UPF0231 protein YacL (120 aa).

The protein belongs to the UPF0231 family.

The protein is UPF0231 protein YacL of Escherichia coli O6:K15:H31 (strain 536 / UPEC).